The following is an 861-amino-acid chain: DNA mismatch repair protein MutS (861 aa).

ATP is bound at residue 617–624; it reads GPNMGGKS. A disordered region spans residues 799–822; the sequence is ETTSLPHEQPPAAKAKDAPQVPHQ. Over residues 808–820 the composition is skewed to low complexity; it reads PPAAKAKDAPQVP.

It belongs to the DNA mismatch repair MutS family.

This protein is involved in the repair of mismatches in DNA. It is possible that it carries out the mismatch recognition step. This protein has a weak ATPase activity. The sequence is that of DNA mismatch repair protein MutS from Pseudomonas putida (strain GB-1).